The following is a 1290-amino-acid chain: DNA-directed RNA polymerase subunit beta' (1290 aa).

Positions 68, 70, 83, and 86 each coordinate Zn(2+). Positions 530, 532, and 534 each coordinate Mg(2+). Zn(2+)-binding residues include Cys-909, Cys-985, Cys-992, and Cys-995.

The protein belongs to the RNA polymerase beta' chain family. As to quaternary structure, the RNAP catalytic core consists of 2 alpha, 1 beta, 1 beta' and 1 omega subunit. When a sigma factor is associated with the core the holoenzyme is formed, which can initiate transcription. The cofactor is Mg(2+). Requires Zn(2+) as cofactor.

The catalysed reaction is RNA(n) + a ribonucleoside 5'-triphosphate = RNA(n+1) + diphosphate. In terms of biological role, DNA-dependent RNA polymerase catalyzes the transcription of DNA into RNA using the four ribonucleoside triphosphates as substrates. In Mycoplasma pneumoniae (strain ATCC 29342 / M129 / Subtype 1) (Mycoplasmoides pneumoniae), this protein is DNA-directed RNA polymerase subunit beta'.